We begin with the raw amino-acid sequence, 299 residues long: Nucleophosmin (299 aa).

The span at 125 to 134 (ESSDDEDEEH) shows a compositional bias: acidic residues. The interval 125–247 (ESSDDEDEEH…TPKTPLSSEE (123 aa)) is disordered. The short motif at 153 to 158 (PRKKTR) is the Nuclear localization signal element. Over residues 160–187 (EEEEEDSDEDDDDDEDDDDEDDDEEEEE) the composition is skewed to acidic residues. Basic and acidic residues predominate over residues 188–197 (TPVKKTDSTK). The short motif at 189–195 (PVKKTDS) is the Nuclear localization signal element. 4 consecutive repeats follow at residues 218 to 220 (KTP), 221 to 223 (KTP), 237 to 239 (KTP), and 240 to 242 (KTP). A 4 X 3 AA repeats of K-T-P region spans residues 218-242 (KTPKTPEQKGKQDTKPQTPKTPKTP). Residues 221 to 231 (KTPEQKGKQDT) are compositionally biased toward basic and acidic residues. Positions 232 to 242 (KPQTPKTPKTP) are enriched in low complexity.

Belongs to the nucleoplasmin family. In terms of assembly, decamer formed by two pentameric rings associated in a head-to-head fashion. Phosphorylated.

It is found in the cytoplasm. The protein localises to the nucleus. The protein resides in the nucleoplasm. Its subcellular location is the nucleolus. In terms of biological role, acts as a chaperonin for the core histones H3, H2B and H4. Associated with nucleolar ribonucleoprotein structures and bind single-stranded nucleic acids. It may function in the assembly and/or transport of ribosome. May stimulate endonuclease activity on apurinic/apyrimidinic (AP) double-stranded DNA. May inhibit endonuclease activity on AP single-stranded RNA. In Xenopus laevis (African clawed frog), this protein is Nucleophosmin (npm1).